The primary structure comprises 398 residues: S-adenosylmethionine synthase (398 aa).

His-17 is an ATP binding site. Asp-19 lines the Mg(2+) pocket. A K(+)-binding site is contributed by Glu-45. Glu-58 and Gln-101 together coordinate L-methionine. The tract at residues 101–111 (QSPDIAQGVDK) is flexible loop. ATP is bound by residues 176–178 (DGK), 243–244 (RF), Asp-252, 258–259 (RK), and Lys-279. Asp-252 lines the L-methionine pocket. Residue Lys-283 coordinates L-methionine.

Belongs to the AdoMet synthase family. Homotetramer; dimer of dimers. The cofactor is Mg(2+). It depends on K(+) as a cofactor.

Its subcellular location is the cytoplasm. The enzyme catalyses L-methionine + ATP + H2O = S-adenosyl-L-methionine + phosphate + diphosphate. It participates in amino-acid biosynthesis; S-adenosyl-L-methionine biosynthesis; S-adenosyl-L-methionine from L-methionine: step 1/1. In terms of biological role, catalyzes the formation of S-adenosylmethionine (AdoMet) from methionine and ATP. The overall synthetic reaction is composed of two sequential steps, AdoMet formation and the subsequent tripolyphosphate hydrolysis which occurs prior to release of AdoMet from the enzyme. The protein is S-adenosylmethionine synthase of Staphylococcus haemolyticus (strain JCSC1435).